The following is a 199-amino-acid chain: Adenylate kinase (199 aa).

10–15 (GAGKGT) lines the ATP pocket. Positions 30-59 (STGDMLRAAVAARTPVGLQAKSIMESGGLV) are NMP. Residues T31, R36, 57–59 (GLV), 85–88 (GFPR), and Q92 each bind AMP. Positions 126-142 (KRAAETLARGEAVRKDD) are LID. R127 provides a ligand contact to ATP. R139 and R150 together coordinate AMP. Position 178 (A178) interacts with ATP.

It belongs to the adenylate kinase family. In terms of assembly, monomer.

It localises to the cytoplasm. It carries out the reaction AMP + ATP = 2 ADP. It functions in the pathway purine metabolism; AMP biosynthesis via salvage pathway; AMP from ADP: step 1/1. Catalyzes the reversible transfer of the terminal phosphate group between ATP and AMP. Plays an important role in cellular energy homeostasis and in adenine nucleotide metabolism. The polypeptide is Adenylate kinase (Methylobacterium nodulans (strain LMG 21967 / CNCM I-2342 / ORS 2060)).